A 269-amino-acid chain; its full sequence is Eukaryotic translation initiation factor 3 subunit G-1 (269 aa).

The RRM domain occupies 188 to 266; it reads AAIRISNLSE…LILSVEWSKP (79 aa).

It belongs to the eIF-3 subunit G family. In terms of assembly, component of the eukaryotic translation initiation factor 3 (eIF-3) complex. The eIF-3 complex interacts with pix.

Its subcellular location is the cytoplasm. RNA-binding component of the eukaryotic translation initiation factor 3 (eIF-3) complex, which is involved in protein synthesis of a specialized repertoire of mRNAs and, together with other initiation factors, stimulates binding of mRNA and methionyl-tRNAi to the 40S ribosome. The eIF-3 complex specifically targets and initiates translation of a subset of mRNAs involved in cell proliferation. This subunit can bind 18S rRNA. This Drosophila willistoni (Fruit fly) protein is Eukaryotic translation initiation factor 3 subunit G-1.